The chain runs to 170 residues: Neurotensin/neuromedin N (170 aa).

The signal sequence occupies residues 1 to 23 (MMAGMKIQLVCMLLLAFSSWSLC). The residue at position 151 (Gln-151) is a Pyrrolidone carboxylic acid.

This sequence belongs to the neurotensin family. In terms of assembly, interacts with NTSR1. Interacts with SORT1. Interacts with SORL1. Post-translationally, neurotensin is cleaved and degraded by Angiotensin-converting enzyme (ACE) and neprilysin (MME).

The protein localises to the secreted. It localises to the cytoplasmic vesicle. The protein resides in the secretory vesicle. Its function is as follows. Neurotensin may play an endocrine or paracrine role in the regulation of fat metabolism. It causes contraction of smooth muscle. The protein is Neurotensin/neuromedin N (NTS) of Homo sapiens (Human).